Reading from the N-terminus, the 191-residue chain is Protein Ves (191 aa).

It belongs to the Ves family.

The polypeptide is Protein Ves (Citrobacter koseri (strain ATCC BAA-895 / CDC 4225-83 / SGSC4696)).